A 131-amino-acid chain; its full sequence is Urease subunit beta (131 aa).

The segment at 100 to 131 is disordered; that stretch reads PLDPAAGVTSDEDAASAVVPRGAETSEREARA.

It belongs to the urease beta subunit family. In terms of assembly, heterotrimer of UreA (gamma), UreB (beta) and UreC (alpha) subunits. Three heterotrimers associate to form the active enzyme.

The protein resides in the cytoplasm. The enzyme catalyses urea + 2 H2O + H(+) = hydrogencarbonate + 2 NH4(+). Its pathway is nitrogen metabolism; urea degradation; CO(2) and NH(3) from urea (urease route): step 1/1. The protein is Urease subunit beta of Kocuria rhizophila (strain ATCC 9341 / DSM 348 / NBRC 103217 / DC2201).